The primary structure comprises 538 residues: MFS-type transporter tndD (538 aa).

The segment at 1-42 is disordered; it reads MSLSGSDSHLAVSPTLAEDMNSSDTSAGLAETPPADEEKRSI. N-linked (GlcNAc...) asparagine glycans are attached at residues Asn-21 and Asn-71. 11 helical membrane passes run 81–101, 115–135, 153–173, 203–223, 235–255, 309–329, 348–368, 394–414, 422–442, 444–464, and 485–505; these read VGIV…FAPG, LLAG…PLIL, ICFT…MLIA, GGVI…GPVA, WVFW…FLFL, PIVA…YLMF, GLTF…IGAV, LPPL…YGWS, IVPI…FMCI, SYLV…NTVV, and LGWG…IPWA.

It belongs to the major facilitator superfamily.

The protein resides in the membrane. Functionally, MFS-type transporter; part of the gene cluster that mediates the biosynthesis of talaronoid C, a fusicoccane diterpenoid with an unprecedented tricyclic 5/8/6 ring system. The protein is MFS-type transporter tndD of Aspergillus flavipes.